The primary structure comprises 286 residues: Meiotically up-regulated gene 64 protein (286 aa).

The protein localises to the cytoplasm. In terms of biological role, has a role in meiosis. The protein is Meiotically up-regulated gene 64 protein (mug64) of Schizosaccharomyces pombe (strain 972 / ATCC 24843) (Fission yeast).